Consider the following 762-residue polypeptide: 5-methyltetrahydropteroyltriglutamate--homocysteine methyltransferase (762 aa).

5-methyltetrahydropteroyltri-L-glutamate contacts are provided by residues 17 to 20 and Lys-111; that span reads REWK. L-homocysteine-binding positions include 435 to 437 and Glu-488; that span reads IGS. Residues 435 to 437 and Glu-488 contribute to the L-methionine site; that span reads IGS. Residues 519–520 and Trp-565 contribute to the 5-methyltetrahydropteroyltri-L-glutamate site; that span reads RC. Asp-603 contributes to the L-homocysteine binding site. Asp-603 contacts L-methionine. Glu-609 is a binding site for 5-methyltetrahydropteroyltri-L-glutamate. His-645, Cys-647, and Glu-669 together coordinate Zn(2+). Residue His-698 is the Proton donor of the active site. Position 730 (Cys-730) interacts with Zn(2+).

It belongs to the vitamin-B12 independent methionine synthase family. It depends on Zn(2+) as a cofactor.

The catalysed reaction is 5-methyltetrahydropteroyltri-L-glutamate + L-homocysteine = tetrahydropteroyltri-L-glutamate + L-methionine. It functions in the pathway amino-acid biosynthesis; L-methionine biosynthesis via de novo pathway; L-methionine from L-homocysteine (MetE route): step 1/1. Its function is as follows. Catalyzes the transfer of a methyl group from 5-methyltetrahydrofolate to homocysteine resulting in methionine formation. This is 5-methyltetrahydropteroyltriglutamate--homocysteine methyltransferase from Bacillus thuringiensis subsp. konkukian (strain 97-27).